The sequence spans 178 residues: Small ribosomal subunit protein uS4 (178 aa).

Residues 104 to 166 (RRLQTIVYRK…PNSPMASENH (63 aa)) enclose the S4 RNA-binding domain. Residues 158 to 178 (NSPMASENHPERTAAVSEENQ) form a disordered region.

Belongs to the universal ribosomal protein uS4 family. Part of the 30S ribosomal subunit. Contacts protein S5. The interaction surface between S4 and S5 is involved in control of translational fidelity.

Its function is as follows. One of the primary rRNA binding proteins, it binds directly to 16S rRNA where it nucleates assembly of the body of the 30S subunit. In terms of biological role, with S5 and S12 plays an important role in translational accuracy. The protein is Small ribosomal subunit protein uS4 of Methanococcus maripaludis (strain C6 / ATCC BAA-1332).